A 452-amino-acid chain; its full sequence is Serine--tRNA ligase (452 aa).

251-253 serves as a coordination point for L-serine; it reads TSE. 282–284 contributes to the ATP binding site; sequence RSE. E305 provides a ligand contact to L-serine. 369–372 contacts ATP; sequence EISS. S404 lines the L-serine pocket.

Belongs to the class-II aminoacyl-tRNA synthetase family. Type-1 seryl-tRNA synthetase subfamily. Homodimer. The tRNA molecule binds across the dimer.

It is found in the cytoplasm. It carries out the reaction tRNA(Ser) + L-serine + ATP = L-seryl-tRNA(Ser) + AMP + diphosphate + H(+). It catalyses the reaction tRNA(Sec) + L-serine + ATP = L-seryl-tRNA(Sec) + AMP + diphosphate + H(+). The protein operates within aminoacyl-tRNA biosynthesis; selenocysteinyl-tRNA(Sec) biosynthesis; L-seryl-tRNA(Sec) from L-serine and tRNA(Sec): step 1/1. In terms of biological role, catalyzes the attachment of serine to tRNA(Ser). Is also able to aminoacylate tRNA(Sec) with serine, to form the misacylated tRNA L-seryl-tRNA(Sec), which will be further converted into selenocysteinyl-tRNA(Sec). This is Serine--tRNA ligase from Albidiferax ferrireducens (strain ATCC BAA-621 / DSM 15236 / T118) (Rhodoferax ferrireducens).